The following is a 357-amino-acid chain: MSTNPIQPLLDVLYQGKSLSREQTAELFGALIRGEMSEAAMAGMLVALKMRGETIDEISGAADAMRAAAKPFPCPERNNNPLHNGIVDIVGTGGDGFNTINISTTAAFVAAAAGAKVAKHGNRSVSSKSGSSDLLAQFGIDLTMSPETASRCLDALNLCFLFAPHYHGGVKHAVPVRQALKTRTLFNVLGPLINPARPEFMLLGVYSPELVLPIAKVLKALGTKRAMVVHGSGLDEVALHGNTQVAELKDGDIIEYQLTPADLGVPLAQISDLEGGEPAQNALITEAILKGRGTEAHANAVAINAGCALYVCGITDSVKAGTLLALATIQSGKAFELLSQLAKVSGEALVNGQERGR.

Residues G91, 94 to 95 (GD), T99, 101 to 104 (NIST), 119 to 127 (KHGNRSVSS), and S131 contribute to the 5-phospho-alpha-D-ribose 1-diphosphate site. G91 serves as a coordination point for anthranilate. A Mg(2+)-binding site is contributed by S103. N122 is an anthranilate binding site. R177 is a binding site for anthranilate. D235 and E236 together coordinate Mg(2+).

Belongs to the anthranilate phosphoribosyltransferase family. In terms of assembly, homodimer. Mg(2+) serves as cofactor.

It catalyses the reaction N-(5-phospho-beta-D-ribosyl)anthranilate + diphosphate = 5-phospho-alpha-D-ribose 1-diphosphate + anthranilate. It participates in amino-acid biosynthesis; L-tryptophan biosynthesis; L-tryptophan from chorismate: step 2/5. In terms of biological role, catalyzes the transfer of the phosphoribosyl group of 5-phosphorylribose-1-pyrophosphate (PRPP) to anthranilate to yield N-(5'-phosphoribosyl)-anthranilate (PRA). The protein is Anthranilate phosphoribosyltransferase of Shewanella baltica (strain OS155 / ATCC BAA-1091).